Consider the following 200-residue polypeptide: Cytochrome c biogenesis ATP-binding export protein CcmA (200 aa).

In terms of domain architecture, ABC transporter spans 2–200 (LDVIELDFDY…NKADYEEYHL (199 aa)). 34 to 41 (GSNGAGKT) is a binding site for ATP.

This sequence belongs to the ABC transporter superfamily. CcmA exporter (TC 3.A.1.107) family. In terms of assembly, the complex is composed of two ATP-binding proteins (CcmA) and two transmembrane proteins (CcmB).

It is found in the cell inner membrane. The catalysed reaction is heme b(in) + ATP + H2O = heme b(out) + ADP + phosphate + H(+). Its function is as follows. Part of the ABC transporter complex CcmAB involved in the biogenesis of c-type cytochromes; once thought to export heme, this seems not to be the case, but its exact role is uncertain. Responsible for energy coupling to the transport system. This Legionella pneumophila (strain Lens) protein is Cytochrome c biogenesis ATP-binding export protein CcmA.